A 333-amino-acid polypeptide reads, in one-letter code: Ketol-acid reductoisomerase (NADP(+)) (333 aa).

Positions 1–179 (MFYDDDADLS…GGTRAGVIKT (179 aa)) constitute a KARI N-terminal Rossmann domain. Residues 22-25 (YGSQ), lysine 45, serine 48, serine 50, and 80-83 (DTAQ) each bind NADP(+). Histidine 105 is a catalytic residue. Residue glycine 131 participates in NADP(+) binding. Residues 180-325 (TFKDETETDL…KKLRDLMSWV (146 aa)) form the KARI C-terminal knotted domain. Positions 188, 192, 224, and 228 each coordinate Mg(2+). Serine 249 serves as a coordination point for substrate.

It belongs to the ketol-acid reductoisomerase family. It depends on Mg(2+) as a cofactor.

The enzyme catalyses (2R)-2,3-dihydroxy-3-methylbutanoate + NADP(+) = (2S)-2-acetolactate + NADPH + H(+). It catalyses the reaction (2R,3R)-2,3-dihydroxy-3-methylpentanoate + NADP(+) = (S)-2-ethyl-2-hydroxy-3-oxobutanoate + NADPH + H(+). It participates in amino-acid biosynthesis; L-isoleucine biosynthesis; L-isoleucine from 2-oxobutanoate: step 2/4. Its pathway is amino-acid biosynthesis; L-valine biosynthesis; L-valine from pyruvate: step 2/4. Functionally, involved in the biosynthesis of branched-chain amino acids (BCAA). Catalyzes an alkyl-migration followed by a ketol-acid reduction of (S)-2-acetolactate (S2AL) to yield (R)-2,3-dihydroxy-isovalerate. In the isomerase reaction, S2AL is rearranged via a Mg-dependent methyl migration to produce 3-hydroxy-3-methyl-2-ketobutyrate (HMKB). In the reductase reaction, this 2-ketoacid undergoes a metal-dependent reduction by NADPH to yield (R)-2,3-dihydroxy-isovalerate. This chain is Ketol-acid reductoisomerase (NADP(+)), found in Mycobacterium bovis (strain ATCC BAA-935 / AF2122/97).